The primary structure comprises 230 residues: Somatolactin (230 aa).

Residues 1–23 form the signal peptide; the sequence is MNMMTVKQGVWAALLWPYLLAAS. Disulfide bonds link cysteine 28–cysteine 38, cysteine 88–cysteine 204, and cysteine 221–cysteine 229. Residues asparagine 137 and asparagine 144 are each glycosylated (N-linked (GlcNAc...) asparagine).

It belongs to the somatotropin/prolactin family.

It is found in the secreted. The polypeptide is Somatolactin (Hippoglossus hippoglossus (Atlantic halibut)).